A 191-amino-acid chain; its full sequence is MDVGSKEVLMESPPDYSAAPRGRFGIPCCPVHLKRLLIVVVVVVLVVVVIVGALLMGLHMSQKHTEMVLEMSIGAPEAQQHLARSGHLVTTATFSFGSTGLVVYDYQRLLIAYKPAPGTWCYIMKTAPESIPSLEALTRKVQNFQAKPAVPTSKLDQVEGRDAGSAPSRGDLAFLGMAVSTLCGEVPLYYI.

The propeptide occupies 1-23 (MDVGSKEVLMESPPDYSAAPRGR). S-palmitoyl cysteine attachment occurs at residues C28 and C29. The propeptide occupies 59–191 (HMSQKHTEMV…LCGEVPLYYI (133 aa)). Positions 94 to 191 (FSFGSTGLVV…LCGEVPLYYI (98 aa)) constitute a BRICHOS domain. C121 and C183 are oxidised to a cystine.

It localises to the secreted. The protein localises to the extracellular space. Its subcellular location is the surface film. Its function is as follows. Pulmonary surfactant associated proteins promote alveolar stability by lowering the surface tension at the air-liquid interface in the peripheral air spaces. The chain is Surfactant protein C (SFTPC) from Macaca mulatta (Rhesus macaque).